A 614-amino-acid polypeptide reads, in one-letter code: Vitamin B12 transporter BtuB (614 aa).

Positions 1-20 (MIKKATLLTAFSVTAFSAWA) are cleaved as a signal peptide. The TonB box motif lies at 26 to 33 (DTLVVTAN). A TBDR plug domain is found at 38–152 (PRSAVLAPVT…IGGVVNIITT (115 aa)). Cyanocob(III)alamin-binding positions include Ser-85, Asn-92, and 110–111 (VS). In terms of domain architecture, TBDR beta-barrel spans 155-614 (NPGTELTAGW…EYTLSGSYTF (460 aa)). 3 consecutive transmembrane segments (beta stranded) span residues 158–165 (TELTAGWG), 169–178 (YQNYDISTQQ), and 184–195 (TRATLIGDYEYT). Asp-199, Gln-211, Asp-213, and Asp-215 together coordinate Ca(2+). The next 2 membrane-spanning stretches (beta stranded) occupy residues 217 to 227 (FLSKTLYGALE) and 232 to 248 (DRWS…NRTD). Positions 249 and 250 each coordinate Ca(2+). Ala-251 is a binding site for cyanocob(III)alamin. Ca(2+) is bound at residue Asp-261. The next 14 beta stranded transmembrane spans lie at 263 to 277 (RKLY…LRFN), 279 to 296 (ERIQ…KDYN), 309 to 325 (TLDE…NSVV), 328 to 337 (HGNVGAGVDW), 353 to 369 (YDQR…QQLG), 371 to 381 (FTLEAAARSDD), 385 to 400 (FGRH…WEFI), 403 to 417 (YRFI…KAPN), 434 to 443 (KSKQWEGAFE), 449 to 458 (VSWRISGYRN), 473 to 490 (YYNE…TANF), 494 to 509 (PLTH…ARNA), 517 to 529 (RRSK…QLDW), and 535 to 550 (DWGV…YDSD). Thr-309 lines the cyanocob(III)alamin pocket. A cyanocob(III)alamin-binding site is contributed by Arg-517. Tyr-551 contacts cyanocob(III)alamin. Beta stranded transmembrane passes span 558–572 (TVKM…LTVA), 585–596 (IANLFDKDYETV), and 602–614 (AGRE…SYTF). A TonB C-terminal box motif is present at residues 597 to 614 (YGYQTAGREYTLSGSYTF).

The protein belongs to the TonB-dependent receptor family. BtuB (TC 1.B.14.3.1) subfamily.

The protein resides in the cell outer membrane. Its function is as follows. Involved in the active translocation of vitamin B12 (cyanocobalamin) across the outer membrane to the periplasmic space. It derives its energy for transport by interacting with the trans-periplasmic membrane protein TonB. The chain is Vitamin B12 transporter BtuB from Salmonella choleraesuis (strain SC-B67).